A 1124-amino-acid polypeptide reads, in one-letter code: MAPPSEETPLIPQRSCSLLSTEAGALHVLLPARGPGPPQRLSFSFGDHLAEDLCVQAAKASGILPVYHSLFALATEDLSCWFPPSHIFSVEDASTQVLLYRIRFYFPNWFGLEKCHRFGLRKDLASAILDLPVLEHLFAQHRSDLVSGRLPVGLSLKEQGECLSLAVLDLARMAREQAQRPGELLKTVSYKACLPPSLRDLIQGLSFVTRRRIRRTVRRALRRVAACQADRHSLMAKYIMDLERLDPAGAAETFHVGLPGALGGHDGLGLLRVAGDGGIAWTQGEQEVLQPFCDFPEIVDISIKQAPRVGPAGEHRLVTVTRTDNQILEAEFPGLPEALSFVALVDGYFRLTTDSQHFFCKEVAPPRLLEEVAEQCHGPITLDFAINKLKTGGSRPGSYVLRRSPQDFDSFLLTVCVQNPLGPDYKGCLIRRSPTGTFLLVGLSRPHSSLRELLATCWDGGLHVDGVAVTLTSCCIPRPKEKSNLIVVQRGHSPPTSSLVQPQSQYQLSQMTFHKIPADSLEWHENLGHGSFTKIYRGCRHEVVDGEARKTEVLLKVMDAKHKNCMESFLEAASLMSQVSYRHLVLLHGVCMAGDSTMVQEFVHLGAIDMYLRKRGHLVPASWKLQVVKQLAYALNYLEDKGLPHGNVSARKVLLAREGADGSPPFIKLSDPGVSPAVLSLEMLTDRIPWVAPECLREAQTLSLEADKWGFGATVWEVFSGVTMPISALDPAKKLQFYEDRQQLPAPKWTELALLIQQCMAYEPVQRPSFRAVIRDLNSLISSDYELLSDPTPGALAPRDGLWNGAQLYACQDPTIFEERHLKYISQLGKGNFGSVELCRYDPLGDNTGALVAVKQLQHSGPDQQRDFQREIQILKALHSDFIVKYRGVSYGPGRQSLRLVMEYLPSGCLRDFLQRHRARLDASRLLLYSSQICKGMEYLGSRRCVHRDLAARNILVESEAHVKIADFGLAKLLPLDKDYYVVREPGQSPIFWYAPESLSDNIFSRQSDVWSFGVVLYELFTYCDKSCSPSAEFLRMMGCERDVPALCRLLELLEEGQRLPAPPACPAEVHELMKLCWAPSPQDRPSFSALGPQLDMLWSGSRGCETHAFTAHPEGKHHSLSFS.

The interaction with cytokine/interferon/growth hormone receptors stretch occupies residues 1-223; that stretch reads MAPPSEETPL…RRTVRRALRR (223 aa). S17 bears the Phosphoserine mark. In terms of domain architecture, FERM spans 24-356; that stretch reads GALHVLLPAR…GYFRLTTDSQ (333 aa). Residues 375–475 form the SH2; atypical domain; it reads QCHGPITLDF…GVAVTLTSCC (101 aa). In terms of domain architecture, Protein kinase 1 spans 521–781; it reads LEWHENLGHG…AVIRDLNSLI (261 aa). Phosphotyrosine; by autocatalysis is present on Y785. Residues 822 to 1111 form the Protein kinase 2 domain; that stretch reads LKYISQLGKG…SRGCETHAFT (290 aa). Residues 828-836 and K855 each bind ATP; that span reads LGKGNFGSV. Phosphotyrosine occurs at positions 904 and 939. D949 functions as the Proton acceptor in the catalytic mechanism. Y980 and Y981 each carry phosphotyrosine; by autocatalysis.

This sequence belongs to the protein kinase superfamily. Tyr protein kinase family. JAK subfamily. Interacts with STAM2 and MYO18A. Interacts with SHB. Interacts with CD69. Tyrosine phosphorylated in response to IL-2 and IL-4. Dephosphorylation of Tyr-980 and Tyr-981 by PTPN2 negatively regulates cytokine-mediated signaling. In terms of tissue distribution, in NK cells and an NK-like cell line but not in resting T-cells or in other tissues. The S-form is more commonly seen in hematopoietic lines, whereas the B-form is detected in cells both of hematopoietic and epithelial origins.

The protein resides in the endomembrane system. It localises to the cytoplasm. It catalyses the reaction L-tyrosyl-[protein] + ATP = O-phospho-L-tyrosyl-[protein] + ADP + H(+). Its function is as follows. Non-receptor tyrosine kinase involved in various processes such as cell growth, development, or differentiation. Mediates essential signaling events in both innate and adaptive immunity and plays a crucial role in hematopoiesis during T-cells development. In the cytoplasm, plays a pivotal role in signal transduction via its association with type I receptors sharing the common subunit gamma such as IL2R, IL4R, IL7R, IL9R, IL15R and IL21R. Following ligand binding to cell surface receptors, phosphorylates specific tyrosine residues on the cytoplasmic tails of the receptor, creating docking sites for STATs proteins. Subsequently, phosphorylates the STATs proteins once they are recruited to the receptor. Phosphorylated STATs then form homodimer or heterodimers and translocate to the nucleus to activate gene transcription. For example, upon IL2R activation by IL2, JAK1 and JAK3 molecules bind to IL2R beta (IL2RB) and gamma chain (IL2RG) subunits inducing the tyrosine phosphorylation of both receptor subunits on their cytoplasmic domain. Then, STAT5A and STAT5B are recruited, phosphorylated and activated by JAK1 and JAK3. Once activated, dimerized STAT5 translocates to the nucleus and promotes the transcription of specific target genes in a cytokine-specific fashion. This chain is Tyrosine-protein kinase JAK3, found in Homo sapiens (Human).